The sequence spans 131 residues: M-zodatoxin-Lt8o (131 aa).

Positions 1-20 are cleaved as a signal peptide; the sequence is MKYFVVALALVAAFACIAES. Positions 21 to 60 are excised as a propeptide; the sequence is KPAESEHELAEVEEENELADLEDAVWLEHLADLSDLEEAR.

It belongs to the cationic peptide 06 (cytoinsectotoxin) family. As to expression, expressed by the venom gland.

The protein localises to the secreted. Its function is as follows. Insecticidal, cytolytic and antimicrobial peptide. Forms voltage-dependent, ion-permeable channels in membranes. At high concentration causes cell membrane lysis. This chain is M-zodatoxin-Lt8o (cit 1-14), found in Lachesana tarabaevi (Spider).